The following is a 381-amino-acid chain: DNA replication and repair protein RecF (381 aa).

Glycine 30–threonine 37 is a binding site for ATP.

Belongs to the RecF family.

The protein resides in the cytoplasm. Its function is as follows. The RecF protein is involved in DNA metabolism; it is required for DNA replication and normal SOS inducibility. RecF binds preferentially to single-stranded, linear DNA. It also seems to bind ATP. The polypeptide is DNA replication and repair protein RecF (Lactobacillus delbrueckii subsp. bulgaricus (strain ATCC 11842 / DSM 20081 / BCRC 10696 / JCM 1002 / NBRC 13953 / NCIMB 11778 / NCTC 12712 / WDCM 00102 / Lb 14)).